Reading from the N-terminus, the 228-residue chain is Lipoprotein-releasing system ATP-binding protein LolD (228 aa).

Positions 8 to 228 constitute an ABC transporter domain; the sequence is LQAKKLVKAY…ELHDGLLRRL (221 aa). ATP is bound at residue 44–51; sequence GASGSGKS.

The protein belongs to the ABC transporter superfamily. Lipoprotein translocase (TC 3.A.1.125) family. As to quaternary structure, the complex is composed of two ATP-binding proteins (LolD) and two transmembrane proteins (LolC and LolE).

The protein resides in the cell inner membrane. In terms of biological role, part of the ABC transporter complex LolCDE involved in the translocation of mature outer membrane-directed lipoproteins, from the inner membrane to the periplasmic chaperone, LolA. Responsible for the formation of the LolA-lipoprotein complex in an ATP-dependent manner. This is Lipoprotein-releasing system ATP-binding protein LolD from Alcanivorax borkumensis (strain ATCC 700651 / DSM 11573 / NCIMB 13689 / SK2).